Reading from the N-terminus, the 244-residue chain is Tegument protein UL51 homolog (244 aa).

The S-palmitoyl cysteine; by host moiety is linked to residue Cys10.

Belongs to the herpesviridae UL51 family. As to quaternary structure, oligomerizes. Interacts with ORF55; this interaction mediates ORF55 incorporation to virions. In terms of processing, phosphorylated. Palmitoylation is necessary for Golgi localization.

Its subcellular location is the virion tegument. It localises to the host cytoplasm. It is found in the host Golgi apparatus. Its function is as follows. Plays several roles during the time course of infection, including egress of virus particles from the perinuclear space and secondary envelopment of cytoplasmic capsids that bud into specific trans-Golgi network (TGN)-derived membranes. The sequence is that of Tegument protein UL51 homolog (8) from Equus caballus (Horse).